Consider the following 767-residue polypeptide: RNA cytosine C(5)-methyltransferase NSUN2 (767 aa).

A disordered region spans residues Met-1 to Gly-36. Residue Lys-46 forms a Glycyl lysine isopeptide (Lys-Gly) (interchain with G-Cter in SUMO2) linkage. Ser-139 carries the post-translational modification Phosphoserine; by AURKB. S-adenosyl-L-methionine contacts are provided by residues Cys-184–Lys-190, Asp-215, Asp-242, and Asp-268. Cys-321 functions as the Nucleophile in the catalytic mechanism. Positions Asn-436–Asp-481 are disordered. The residue at position 456 (Ser-456) is a Phosphoserine. Basic and acidic residues predominate over residues Thr-461–Lys-470. Glycyl lysine isopeptide (Lys-Gly) (interchain with G-Cter in SUMO2) cross-links involve residues Lys-464 and Lys-470. Ser-473 carries the phosphoserine modification. Glycyl lysine isopeptide (Lys-Gly) (interchain with G-Cter in SUMO2) cross-links involve residues Lys-511 and Lys-516. An N6-acetyllysine; alternate modification is found at Lys-586. Lys-586 is subject to N6-malonyllysine; alternate. Lys-586 participates in a covalent cross-link: Glycyl lysine isopeptide (Lys-Gly) (interchain with G-Cter in SUMO2); alternate. Ser-593 carries the post-translational modification Phosphoserine. Residues Lys-640, Lys-654, and Lys-660 each participate in a glycyl lysine isopeptide (Lys-Gly) (interchain with G-Cter in SUMO2) cross-link. Residue Thr-718 is modified to Phosphothreonine. Over residues Asn-719–Asn-730 the composition is skewed to polar residues. The segment at Asn-719–Arg-767 is disordered. A phosphoserine mark is found at Ser-724, Ser-743, and Ser-751.

It belongs to the class I-like SAM-binding methyltransferase superfamily. RsmB/NOP family. TRM4 subfamily. Interacts with NPM1 and NCL during interphase; interaction is disrupted following phosphorylation at Ser-139. In terms of processing, phosphorylated at Ser-139 by AURKB during mitosis, leading to abolish methyltransferase activity and the interaction with NPM1. In terms of tissue distribution, expressed in adult and fetal brain and in lymphoblastoid cells.

It is found in the nucleus. It localises to the nucleolus. The protein localises to the cytoplasm. The protein resides in the mitochondrion. Its subcellular location is the cytoskeleton. It is found in the spindle. It localises to the secreted. The protein localises to the extracellular exosome. It catalyses the reaction cytidine(48) in tRNA + S-adenosyl-L-methionine = 5-methylcytidine(48) in tRNA + S-adenosyl-L-homocysteine + H(+). The catalysed reaction is cytidine(49) in tRNA + S-adenosyl-L-methionine = 5-methylcytidine(49) in tRNA + S-adenosyl-L-homocysteine + H(+). The enzyme catalyses cytidine(50) in tRNA + S-adenosyl-L-methionine = 5-methylcytidine(50) in tRNA + S-adenosyl-L-homocysteine + H(+). It carries out the reaction cytidine(34) in tRNA precursor + S-adenosyl-L-methionine = 5-methylcytidine(34) in tRNA precursor + S-adenosyl-L-homocysteine + H(+). It catalyses the reaction a cytidine in mRNA + S-adenosyl-L-methionine = a 5-methylcytidine in mRNA + S-adenosyl-L-homocysteine + H(+). Its activity is regulated as follows. Inhibited by magnesium ions. Its function is as follows. RNA cytosine C(5)-methyltransferase that methylates cytosine to 5-methylcytosine (m5C) in various RNAs, such as tRNAs, mRNAs and some long non-coding RNAs (lncRNAs). Involved in various processes, such as epidermal stem cell differentiation, testis differentiation and maternal to zygotic transition during early development: acts by increasing protein synthesis; cytosine C(5)-methylation promoting tRNA stability and preventing mRNA decay. Methylates cytosine to 5-methylcytosine (m5C) at positions 34 and 48 of intron-containing tRNA(Leu)(CAA) precursors, and at positions 48, 49 and 50 of tRNA(Gly)(GCC) precursors. tRNA methylation is required generation of RNA fragments derived from tRNAs (tRFs). Also mediates C(5)-methylation of mitochondrial tRNAs. Catalyzes cytosine C(5)-methylation of mRNAs, leading to stabilize them and prevent mRNA decay: mRNA stabilization involves YBX1 that specifically recognizes and binds m5C-modified transcripts. Cytosine C(5)-methylation of mRNAs also regulates mRNA export: methylated transcripts are specifically recognized by THOC4/ALYREF, which mediates mRNA nucleo-cytoplasmic shuttling. Also mediates cytosine C(5)-methylation of non-coding RNAs, such as vault RNAs (vtRNAs), promoting their processing into regulatory small RNAs. Cytosine C(5)-methylation of vtRNA VTRNA1.1 promotes its processing into small-vault RNA4 (svRNA4) and regulates epidermal differentiation. May act downstream of Myc to regulate epidermal cell growth and proliferation. Required for proper spindle assembly and chromosome segregation, independently of its methyltransferase activity. The polypeptide is RNA cytosine C(5)-methyltransferase NSUN2 (Homo sapiens (Human)).